The sequence spans 310 residues: Olfactory receptor 4K14 (310 aa).

Topologically, residues 1 to 25 are extracellular; the sequence is MDPQNYSLVSEFVLHGLCTSRHLQN. N-linked (GlcNAc...) asparagine glycosylation occurs at Asn5. A helical membrane pass occupies residues 26-49; that stretch reads FFFIFFFGVYVAIMLGNLLILVTV. The Cytoplasmic segment spans residues 50-58; it reads ISDPCLHSS. A helical transmembrane segment spans residues 59-80; the sequence is PMYFLLGNLAFLDMWLASFATP. Residues 81 to 101 lie on the Extracellular side of the membrane; that stretch reads KMIRDFLSDQKLISFGGCMAQ. A disulfide bridge connects residues Cys98 and Cys190. A helical transmembrane segment spans residues 102-121; it reads IFFLHFTGGAEMVLLVSMAY. Residues 122–140 are Cytoplasmic-facing; the sequence is DRYVAICKPLHYMTLMSWQ. The helical transmembrane segment at 141 to 159 threads the bilayer; sequence TCIRLVLASWVVGFVHSIS. Residues 160-196 are Extracellular-facing; that stretch reads QVAFTVNLPYCGPNEVDSFFCDLPLVIKLACMDTYVL. Residues 197–220 traverse the membrane as a helical segment; sequence GIIMISDSGLLSLSCFLLLLISYT. Residues 221 to 236 are Cytoplasmic-facing; sequence VILLAIRQRAAGSTSK. The chain crosses the membrane as a helical span at residues 237–259; that stretch reads ALSTCSAHIMVVTLFFGPCIFVY. Topologically, residues 260–270 are extracellular; sequence VRPFSRFSVDK. A helical transmembrane segment spans residues 271 to 290; the sequence is LLSVFYTIFTPLLNPIIYTL. Topologically, residues 291–310 are cytoplasmic; sequence RNEEMKAAMKKLQNRRVTFQ.

This sequence belongs to the G-protein coupled receptor 1 family.

It localises to the cell membrane. Functionally, odorant receptor. In Homo sapiens (Human), this protein is Olfactory receptor 4K14 (OR4K14).